Consider the following 1137-residue polypeptide: Guanine nucleotide exchange factor DBS (1137 aa).

The region spanning 52–224 is the CRAL-TRIO domain; sequence TAMATDEIMH…DLGGTLDYCH (173 aa). The Spectrin repeat unit spans residues 351–456; it reads LQLRHFEQGF…IARRRGLLSK (106 aa). 2 positions are modified to phosphoserine: serine 457 and serine 480. Residues 503–529 adopt a coiled-coil conformation; the sequence is LETGAENKIQELNAIYKEYESILNQDL. Positions 557–625 are disordered; it reads LAARQTRPVQ…QGRGSAGEEE (69 aa). Over residues 584–597 the composition is skewed to low complexity; it reads GIRRGSENSSSEGG. Residues 607-616 are compositionally biased toward basic and acidic residues; it reads AKSEMSESRQ. A Phosphoserine modification is found at serine 620. In terms of domain architecture, DH spans 631–811; it reads LRRHVMSELL…LGILKAVNDS (181 aa). The region spanning 829 to 945 is the PH domain; sequence KLLMQGSFSV…WVNEIRKVLT (117 aa). Disordered regions lie at residues 955–1058 and 1116–1137; these read SQHR…LVPG and GPSG…RAHP. The segment covering 962–977 has biased composition (low complexity); that stretch reads QSQSLPLPAPTSTSPS. Phosphoserine occurs at positions 1033, 1034, 1041, and 1042. Residues 1055-1116 enclose the SH3 domain; it reads LVPGKYTVVA…PASSLSVRLG (62 aa). The span at 1119-1128 shows a compositional bias: polar residues; that stretch reads GSAQCLSSSG.

It belongs to the MCF2 family. In terms of assembly, interacts with GTP-bound RAC1. Interacts with CDC42. Interacts with RHOA. Interacts with CCPG1, which results in specific inhibition of its exchange activity toward RHOA, but does not affect its activity on CDC42.

It localises to the cytoplasm. It is found in the cell membrane. Its subcellular location is the endomembrane system. Functionally, guanine nucleotide exchange factor that catalyzes guanine nucleotide exchange on RHOA and CDC42, and thereby contributes to the regulation of RHOA and CDC42 signaling pathways. Seems to lack activity with RAC1. Becomes activated and highly tumorigenic by truncation of the N-terminus. Isoform 5 activates CDC42. Its function is as follows. Does not catalyze guanine nucleotide exchange on CDC42. The chain is Guanine nucleotide exchange factor DBS (MCF2L) from Homo sapiens (Human).